A 323-amino-acid polypeptide reads, in one-letter code: tRNA uridine(34) hydroxylase (323 aa).

The region spanning 127–221 (QDENTVVLDA…YGQDPEVQGD (95 aa)) is the Rhodanese domain. Cysteine 181 acts as the Cysteine persulfide intermediate in catalysis.

The protein belongs to the TrhO family.

It carries out the reaction uridine(34) in tRNA + AH2 + O2 = 5-hydroxyuridine(34) in tRNA + A + H2O. In terms of biological role, catalyzes oxygen-dependent 5-hydroxyuridine (ho5U) modification at position 34 in tRNAs. The protein is tRNA uridine(34) hydroxylase of Oceanobacillus iheyensis (strain DSM 14371 / CIP 107618 / JCM 11309 / KCTC 3954 / HTE831).